We begin with the raw amino-acid sequence, 199 residues long: Ribonuclease P protein component 3 (199 aa).

The protein belongs to the eukaryotic/archaeal RNase P protein component 3 family. Consists of a catalytic RNA component and at least 4-5 protein subunits.

The protein localises to the cytoplasm. It catalyses the reaction Endonucleolytic cleavage of RNA, removing 5'-extranucleotides from tRNA precursor.. Part of ribonuclease P, a protein complex that generates mature tRNA molecules by cleaving their 5'-ends. This Archaeoglobus fulgidus (strain ATCC 49558 / DSM 4304 / JCM 9628 / NBRC 100126 / VC-16) protein is Ribonuclease P protein component 3.